A 113-amino-acid chain; its full sequence is MAPPSNPLFVVLCWALFAYLMLVLRDIQAAERQYRTESRDGKCVGEDGLLHAPTELWYNDNDCSEHTCVNDNTGYYEIIRRCTLIVYPPECHLMNGTGTRYPKCCCKVTCELN.

A signal peptide spans 1-29; it reads MAPPSNPLFVVLCWALFAYLMLVLRDIQA.

The protein belongs to the scoloptoxin-16 family. In terms of processing, contains 4 disulfide bonds. In terms of tissue distribution, expressed by the venom gland.

The protein localises to the secreted. In Scolopendra alternans (Florida Keys giant centipede), this protein is U-scoloptoxin(16)-Sa1a.